The following is a 430-amino-acid chain: Tol-Pal system protein TolB (430 aa).

An N-terminal signal peptide occupies residues 1 to 26 (MSLMTKLGLRTLVASCLIAVGGAAHA).

This sequence belongs to the TolB family. The Tol-Pal system is composed of five core proteins: the inner membrane proteins TolA, TolQ and TolR, the periplasmic protein TolB and the outer membrane protein Pal. They form a network linking the inner and outer membranes and the peptidoglycan layer.

Its subcellular location is the periplasm. Its function is as follows. Part of the Tol-Pal system, which plays a role in outer membrane invagination during cell division and is important for maintaining outer membrane integrity. This is Tol-Pal system protein TolB from Paraburkholderia phytofirmans (strain DSM 17436 / LMG 22146 / PsJN) (Burkholderia phytofirmans).